The chain runs to 129 residues: MYFLYVGVFGALGGMCRYAMNLWLGGGDFPSATLAVNLIGCFLLAFLMRFLAEKSRVSLVLLNGIGTGFIGAFTTFSAFSVDTIQLVQSGAWLFAVSYVLASFIGGLIMVKFGRMLSNKLLNRGEHRVG.

4 helical membrane-spanning segments follow: residues 3–23, 32–52, 59–79, and 90–110; these read FLYVGVFGALGGMCRYAMNLW, ATLAVNLIGCFLLAFLMRFLA, LVLLNGIGTGFIGAFTTFSAF, and GAWLFAVSYVLASFIGGLIMV. Positions 71 and 74 each coordinate Na(+).

It belongs to the fluoride channel Fluc/FEX (TC 1.A.43) family.

Its subcellular location is the cell membrane. It carries out the reaction fluoride(in) = fluoride(out). Its activity is regulated as follows. Na(+) is not transported, but it plays an essential structural role and its presence is essential for fluoride channel function. Fluoride-specific ion channel. Important for reducing fluoride concentration in the cell, thus reducing its toxicity. The polypeptide is Fluoride-specific ion channel FluC 2 (Listeria monocytogenes serovar 1/2a (strain ATCC BAA-679 / EGD-e)).